The following is a 441-amino-acid chain: Ankyrin repeat and MYND domain-containing protein 2 (441 aa).

ANK repeat units lie at residues 45-74, 79-108, and 159-188; these read NGMT…DVNC, HGYT…ETDV, and KLAG…NPLL. 8 residues coordinate Zn(2+): cysteine 320, cysteine 323, cysteine 332, cysteine 335, cysteine 341, cysteine 345, histidine 353, and cysteine 357. An MYND-type zinc finger spans residues 320–357; the sequence is CTTCGEKGASKRCSVCKMVIYCDQTCQKTHWFTHKKIC. Over residues 374–384 the composition is skewed to basic and acidic residues; it reads EKRQEENHGKL. Residues 374 to 441 form a disordered region; the sequence is EKRQEENHGK…APAGPQVSEE (68 aa).

In terms of assembly, interacts with the retinal-specific guanylyl cyclase GC1.

Its subcellular location is the cell projection. The protein localises to the cilium. May be involved in the trafficking of signaling proteins to the cilia. In Homo sapiens (Human), this protein is Ankyrin repeat and MYND domain-containing protein 2 (ANKMY2).